Reading from the N-terminus, the 302-residue chain is Protein transport protein SEC13 homolog A (302 aa).

WD repeat units lie at residues Gly-9 to His-48, Gly-54 to Gln-95, Asp-101 to Thr-142, Ala-148 to Asp-201, Lys-208 to Glu-251, and Asp-257 to Gln-296.

The protein belongs to the WD repeat SEC13 family. Interacts with MAG5, SEC31A and SEC31B.

It localises to the golgi apparatus. Its subcellular location is the endoplasmic reticulum. Functionally, required for protein transport from the endoplasmic reticulum to the Golgi apparatus. This Arabidopsis thaliana (Mouse-ear cress) protein is Protein transport protein SEC13 homolog A.